The chain runs to 273 residues: MKLTIAISLASILLLSVAHVAQGCDCGCPTTSPKPCQTTVPTCAPTTTTTTTTTCAPPTRPPPPPCTDAPTTTKRTTEKSTTRRTTTTTRQTTTRPTTTTTTTTTTRRPTTRSTTTRHTTTTTTTTRRPTTTTTTTRRPTTTTTTTRRPTTTTTTTRRPTTTTTTTRLPTTRSTTTRQTTKSTTSKRPTHETTTTSKRPTQETTTTTRRATQATTTPKPTNKPGCGCKSCGPGGIPCGSCPKRQGLCTELNNLLRQLERRVRECVCGQPVWLL.

The first 23 residues, 1 to 23 (MKLTIAISLASILLLSVAHVAQG), serve as a signal peptide directing secretion. The span at 47 to 57 (TTTTTTTTCAP) shows a compositional bias: low complexity. A disordered region spans residues 47-225 (TTTTTTTTCA…TPKPTNKPGC (179 aa)). Residues 58–67 (PTRPPPPPCT) show a composition bias toward pro residues. Residues 83–225 (RRTTTTTRQT…TPKPTNKPGC (143 aa)) show a composition bias toward low complexity.

The protein is Salivary glue protein Sgs-3 (Sgs3) of Drosophila yakuba (Fruit fly).